The following is a 325-amino-acid chain: NADH-quinone oxidoreductase subunit H (325 aa).

Helical transmembrane passes span 11 to 31 (ILLT…CGAF), 50 to 69 (SRVG…KMFF), 81 to 101 (LIFT…FAIV), 114 to 134 (IGIL…LFAG), 154 to 174 (LSYE…AGSF), 186 to 206 (LWNI…GVAV), 237 to 257 (FFVG…TLFF), 265 to 285 (LPPF…FILV), and 304 to 324 (ICLP…LYHA).

Belongs to the complex I subunit 1 family. As to quaternary structure, NDH-1 is composed of 13 different subunits. Subunits NuoA, H, J, K, L, M, N constitute the membrane sector of the complex.

The protein resides in the cell inner membrane. The enzyme catalyses a quinone + NADH + 5 H(+)(in) = a quinol + NAD(+) + 4 H(+)(out). Functionally, NDH-1 shuttles electrons from NADH, via FMN and iron-sulfur (Fe-S) centers, to quinones in the respiratory chain. The immediate electron acceptor for the enzyme in this species is believed to be ubiquinone. Couples the redox reaction to proton translocation (for every two electrons transferred, four hydrogen ions are translocated across the cytoplasmic membrane), and thus conserves the redox energy in a proton gradient. This subunit may bind ubiquinone. This chain is NADH-quinone oxidoreductase subunit H, found in Edwardsiella ictaluri (strain 93-146).